We begin with the raw amino-acid sequence, 146 residues long: uncharacterized protein (146 aa).

A helical transmembrane segment spans residues 6-26 (IPIFVISLSNISHIILAIFFF).

It is found in the membrane. This is an uncharacterized protein from Caenorhabditis elegans.